Reading from the N-terminus, the 152-residue chain is Large ribosomal subunit protein bL9 (152 aa).

It belongs to the bacterial ribosomal protein bL9 family.

In terms of biological role, binds to the 23S rRNA. The protein is Large ribosomal subunit protein bL9 of Mycobacterium leprae (strain Br4923).